The primary structure comprises 216 residues: Thymidylate kinase (216 aa).

10–17 (GPDGAGKS) contributes to the ATP binding site.

Belongs to the thymidylate kinase family.

It carries out the reaction dTMP + ATP = dTDP + ADP. In terms of biological role, phosphorylation of dTMP to form dTDP in both de novo and salvage pathways of dTTP synthesis. This chain is Thymidylate kinase, found in Lactobacillus acidophilus (strain ATCC 700396 / NCK56 / N2 / NCFM).